The chain runs to 196 residues: Imidazole glycerol phosphate synthase subunit HisH (196 aa).

The 195-residue stretch at 2-196 (DVVILDTGCA…AQLMKNFLEM (195 aa)) folds into the Glutamine amidotransferase type-1 domain. Cys77 serves as the catalytic Nucleophile. Active-site residues include His178 and Glu180.

Heterodimer of HisH and HisF.

The protein localises to the cytoplasm. The catalysed reaction is 5-[(5-phospho-1-deoxy-D-ribulos-1-ylimino)methylamino]-1-(5-phospho-beta-D-ribosyl)imidazole-4-carboxamide + L-glutamine = D-erythro-1-(imidazol-4-yl)glycerol 3-phosphate + 5-amino-1-(5-phospho-beta-D-ribosyl)imidazole-4-carboxamide + L-glutamate + H(+). The enzyme catalyses L-glutamine + H2O = L-glutamate + NH4(+). It functions in the pathway amino-acid biosynthesis; L-histidine biosynthesis; L-histidine from 5-phospho-alpha-D-ribose 1-diphosphate: step 5/9. Functionally, IGPS catalyzes the conversion of PRFAR and glutamine to IGP, AICAR and glutamate. The HisH subunit catalyzes the hydrolysis of glutamine to glutamate and ammonia as part of the synthesis of IGP and AICAR. The resulting ammonia molecule is channeled to the active site of HisF. This chain is Imidazole glycerol phosphate synthase subunit HisH, found in Yersinia pestis.